A 432-amino-acid chain; its full sequence is Peptidase B (432 aa).

Mn(2+) contacts are provided by Lys-196 and Asp-201. Residue Lys-208 is part of the active site. Asp-219, Asp-278, and Glu-280 together coordinate Mn(2+). The active site involves Arg-282.

Belongs to the peptidase M17 family. Homohexamer. It depends on Mn(2+) as a cofactor.

It is found in the cytoplasm. It carries out the reaction Release of an N-terminal amino acid, Xaa, from a peptide or arylamide. Xaa is preferably Glu or Asp but may be other amino acids, including Leu, Met, His, Cys and Gln.. Its function is as follows. Probably plays an important role in intracellular peptide degradation. This chain is Peptidase B, found in Yersinia pseudotuberculosis serotype O:1b (strain IP 31758).